We begin with the raw amino-acid sequence, 280 residues long: uncharacterized protein (280 aa).

6 consecutive transmembrane segments (helical) span residues 46–66 (LIFL…FVCT), 81–101 (IACS…FLIP), 114–134 (FFYL…SWVV), 137–157 (VWHF…IKLQ), 170–190 (ILFI…LLEL), and 225–245 (IVAC…ALIV). Residues 258-280 (ESGSIEKKNKSSPPPRTWQSNYQ) form a disordered region.

Belongs to the TatC family.

Its subcellular location is the mitochondrion membrane. This is an uncharacterized protein from Arabidopsis thaliana (Mouse-ear cress).